We begin with the raw amino-acid sequence, 90 residues long: Co-chaperonin GroES (90 aa).

It belongs to the GroES chaperonin family. In terms of assembly, heptamer of 7 subunits arranged in a ring. Interacts with the chaperonin GroEL.

Its subcellular location is the cytoplasm. In terms of biological role, together with the chaperonin GroEL, plays an essential role in assisting protein folding. The GroEL-GroES system forms a nano-cage that allows encapsulation of the non-native substrate proteins and provides a physical environment optimized to promote and accelerate protein folding. GroES binds to the apical surface of the GroEL ring, thereby capping the opening of the GroEL channel. This is Co-chaperonin GroES from Bacteroides fragilis (strain ATCC 25285 / DSM 2151 / CCUG 4856 / JCM 11019 / LMG 10263 / NCTC 9343 / Onslow / VPI 2553 / EN-2).